The sequence spans 678 residues: Protein CASP (678 aa).

Residues 1-619 lie on the Cytoplasmic side of the membrane; that stretch reads MAANVGSMFQ…LVLSNKMART (619 aa). Coiled-coil stretches lie at residues 67 to 450 and 502 to 556; these read LLKS…QDLS and LSII…FLQS. Ser-586 is subject to Phosphoserine. Residues 620-640 form a helical; Anchor for type IV membrane protein membrane-spanning segment; the sequence is IGFFYTLFLHCLVFLVLYKLA. The Lumenal portion of the chain corresponds to 641-678; that stretch reads WSESMERDCATFCAKKFADHLHKFHENDNGAAAGDLWQ.

This sequence belongs to the CASP family. As to quaternary structure, homodimer; disulfide-linked. Interacts with GOLGA5.

The protein localises to the golgi apparatus membrane. Its function is as follows. May be involved in intra-Golgi retrograde transport. This Homo sapiens (Human) protein is Protein CASP (CUX1).